A 216-amino-acid chain; its full sequence is tRNA (guanine-N(7)-)-methyltransferase (216 aa).

The S-adenosyl-L-methionine site is built by E43, D68, N95, and N117. Residues D153 and 190 to 193 each bind substrate; that span reads TEYE.

This sequence belongs to the class I-like SAM-binding methyltransferase superfamily. TrmB family.

The enzyme catalyses guanosine(46) in tRNA + S-adenosyl-L-methionine = N(7)-methylguanosine(46) in tRNA + S-adenosyl-L-homocysteine. It functions in the pathway tRNA modification; N(7)-methylguanine-tRNA biosynthesis. Catalyzes the formation of N(7)-methylguanine at position 46 (m7G46) in tRNA. The polypeptide is tRNA (guanine-N(7)-)-methyltransferase (Desulfitobacterium hafniense (strain Y51)).